A 294-amino-acid chain; its full sequence is N-acetylmuramic acid 6-phosphate etherase (294 aa).

One can recognise an SIS domain in the interval 54 to 217 (VISSFQNGGR…STASMIGIGK (164 aa)). Glu82 (proton donor) is an active-site residue. Residue Glu113 is part of the active site.

It belongs to the GCKR-like family. MurNAc-6-P etherase subfamily. Homodimer.

It catalyses the reaction N-acetyl-D-muramate 6-phosphate + H2O = N-acetyl-D-glucosamine 6-phosphate + (R)-lactate. It participates in amino-sugar metabolism; N-acetylmuramate degradation. Functionally, specifically catalyzes the cleavage of the D-lactyl ether substituent of MurNAc 6-phosphate, producing GlcNAc 6-phosphate and D-lactate. The sequence is that of N-acetylmuramic acid 6-phosphate etherase from Bacillus cytotoxicus (strain DSM 22905 / CIP 110041 / 391-98 / NVH 391-98).